Here is a 304-residue protein sequence, read N- to C-terminus: UDP-3-O-acyl-N-acetylglucosamine deacetylase (304 aa).

Residues histidine 79, histidine 238, and aspartate 242 each contribute to the Zn(2+) site. Histidine 265 functions as the Proton donor in the catalytic mechanism.

Belongs to the LpxC family. Zn(2+) is required as a cofactor.

The enzyme catalyses a UDP-3-O-[(3R)-3-hydroxyacyl]-N-acetyl-alpha-D-glucosamine + H2O = a UDP-3-O-[(3R)-3-hydroxyacyl]-alpha-D-glucosamine + acetate. The protein operates within glycolipid biosynthesis; lipid IV(A) biosynthesis; lipid IV(A) from (3R)-3-hydroxytetradecanoyl-[acyl-carrier-protein] and UDP-N-acetyl-alpha-D-glucosamine: step 2/6. Its function is as follows. Catalyzes the hydrolysis of UDP-3-O-myristoyl-N-acetylglucosamine to form UDP-3-O-myristoylglucosamine and acetate, the committed step in lipid A biosynthesis. This Laribacter hongkongensis (strain HLHK9) protein is UDP-3-O-acyl-N-acetylglucosamine deacetylase.